Here is a 333-residue protein sequence, read N- to C-terminus: T-cell surface glycoprotein CD1b (333 aa).

A signal peptide spans methionine 1 to asparagine 17. Over serine 18–serine 303 the chain is Extracellular. 3 N-linked (GlcNAc...) asparagine glycosylation sites follow: asparagine 38, asparagine 75, and asparagine 146. Cystine bridges form between cysteine 120–cysteine 184, cysteine 149–cysteine 163, and cysteine 224–cysteine 279. An Ig-like domain is found at proline 185–tryptophan 295. N-linked (GlcNAc...) asparagine glycosylation is present at asparagine 258. A helical membrane pass occupies residues isoleucine 304–methionine 324. Residues arginine 325–proline 333 lie on the Cytoplasmic side of the membrane. Positions tyrosine 329–isoleucine 332 match the Internalization signal motif.

As to quaternary structure, heterodimer with B2M (beta-2-microglobulin). Interacts with saposin C. As to expression, expressed on cortical thymocytes, on certain T-cell leukemias, and in various other tissues.

It localises to the cell membrane. Its subcellular location is the endosome membrane. The protein localises to the lysosome membrane. Functionally, antigen-presenting protein that binds self and non-self lipid and glycolipid antigens and presents them to T-cell receptors on natural killer T-cells. This Homo sapiens (Human) protein is T-cell surface glycoprotein CD1b (CD1B).